Reading from the N-terminus, the 282-residue chain is Adenosylcobinamide-GDP ribazoletransferase (282 aa).

6 helical membrane-spanning segments follow: residues G47–L67, F72–F92, A124–L144, A167–L187, G208–L228, and I231–F251.

It belongs to the CobS family. It depends on Mg(2+) as a cofactor.

It is found in the cell inner membrane. It catalyses the reaction alpha-ribazole + adenosylcob(III)inamide-GDP = adenosylcob(III)alamin + GMP + H(+). The enzyme catalyses alpha-ribazole 5'-phosphate + adenosylcob(III)inamide-GDP = adenosylcob(III)alamin 5'-phosphate + GMP + H(+). The protein operates within cofactor biosynthesis; adenosylcobalamin biosynthesis; adenosylcobalamin from cob(II)yrinate a,c-diamide: step 7/7. In terms of biological role, joins adenosylcobinamide-GDP and alpha-ribazole to generate adenosylcobalamin (Ado-cobalamin). Also synthesizes adenosylcobalamin 5'-phosphate from adenosylcobinamide-GDP and alpha-ribazole 5'-phosphate. The chain is Adenosylcobinamide-GDP ribazoletransferase from Polaromonas sp. (strain JS666 / ATCC BAA-500).